The primary structure comprises 237 residues: Probable Bax inhibitor 1 (237 aa).

Residues 1–29 (MNVFDRNINFDSLFKFSQISHSTQVHLKN) lie on the Cytoplasmic side of the membrane. The helical transmembrane segment at 30 to 50 (VYSSLAVCMFVAAAGSYVHVV) threads the bilayer. The Lumenal segment spans residues 51-52 (TR). A helical membrane pass occupies residues 53 to 73 (LFQGGMLSVLGSLGMMFWLAM). Residues 74–86 (TPHNSETEKKRLA) are Cytoplasmic-facing. A helical transmembrane segment spans residues 87-107 (ILAGFAFLTGVGLCPTLDFVI). Residues 108–112 (AINPS) lie on the Lumenal side of the membrane. Residues 113-133 (IIVTAFLGTSVIFVCFTLSAL) form a helical membrane-spanning segment. The Cytoplasmic portion of the chain corresponds to 134-139 (YAKRRS). The helical transmembrane segment at 140–160 (YLFLGGTLMSGLSILFLMSMM) threads the bilayer. The Lumenal segment spans residues 161–166 (NMFFGS). The helical transmembrane segment at 167 to 187 (VMLFKAHMYLGLLIMCGFVLX) threads the bilayer. At 188–206 (DTQLIIEKAENGDKDYVWH) the chain is on the cytoplasmic side. The segment at residues 207 to 227 (SVDLFLDFITIFRKLMVILAL) is an intramembrane region (helical). Topologically, residues 228-237 (NDKDKKKEKK) are cytoplasmic.

It belongs to the BI1 family. Highly abundant in testis.

Its subcellular location is the endoplasmic reticulum membrane. Suppressor of apoptosis. Modulates unfolded protein response signaling. Modulate ER calcium homeostasis by acting as a calcium-leak channel. The protein is Probable Bax inhibitor 1 (tmbim6) of Paralichthys olivaceus (Bastard halibut).